A 153-amino-acid polypeptide reads, in one-letter code: Large ribosomal subunit protein uL15 (153 aa).

Residues 21-41 (RGIGSGKGKTGGRGIKGQKSR) are disordered. Over residues 23–35 (IGSGKGKTGGRGI) the composition is skewed to gly residues.

The protein belongs to the universal ribosomal protein uL15 family. As to quaternary structure, part of the 50S ribosomal subunit.

In terms of biological role, binds to the 23S rRNA. The polypeptide is Large ribosomal subunit protein uL15 (Rickettsia africae (strain ESF-5)).